The following is a 150-amino-acid chain: Profilin (150 aa).

The protein belongs to the profilin family. In terms of assembly, occurs in many kinds of cells as a complex with monomeric actin in a 1:1 ratio.

Its subcellular location is the cytoplasm. It localises to the cytoskeleton. In terms of biological role, binds to actin and affects the structure of the cytoskeleton. At high concentrations, profilin prevents the polymerization of actin, whereas it enhances it at low concentrations. By binding to PIP2, it inhibits the formation of IP3 and DG. The polypeptide is Profilin (Trypanosoma brucei brucei).